Here is a 158-residue protein sequence, read N- to C-terminus: uncharacterized protein (158 aa).

The next 2 membrane-spanning stretches (helical) occupy residues 10-30 (LSSL…QFIV) and 137-157 (IEVF…AYFF).

It is found in the cell membrane. This is an uncharacterized protein from Bacillus subtilis (strain 168).